Here is a 78-residue protein sequence, read N- to C-terminus: Large ribosomal subunit protein uL29 (78 aa).

This sequence belongs to the universal ribosomal protein uL29 family.

The polypeptide is Large ribosomal subunit protein uL29 (Salinispora arenicola (strain CNS-205)).